The following is a 447-amino-acid chain: Argininosuccinate synthase (447 aa).

Residues alanine 20 to serine 28 and alanine 46 each bind ATP. Residue tyrosine 102 participates in L-citrulline binding. ATP is bound by residues glycine 132 and threonine 134. Threonine 134, asparagine 138, and aspartate 139 together coordinate L-aspartate. An L-citrulline-binding site is contributed by asparagine 138. Aspartate 139 lines the ATP pocket. L-citrulline-binding residues include arginine 142 and serine 195. An ATP-binding site is contributed by aspartate 197. Residues threonine 204, glutamate 206, and glutamate 283 each contribute to the L-citrulline site.

It belongs to the argininosuccinate synthase family. Type 2 subfamily. In terms of assembly, homotetramer.

It localises to the cytoplasm. It carries out the reaction L-citrulline + L-aspartate + ATP = 2-(N(omega)-L-arginino)succinate + AMP + diphosphate + H(+). The protein operates within amino-acid biosynthesis; L-arginine biosynthesis; L-arginine from L-ornithine and carbamoyl phosphate: step 2/3. This is Argininosuccinate synthase (argG) from Neisseria meningitidis serogroup B (strain ATCC BAA-335 / MC58).